Consider the following 421-residue polypeptide: MSNQLYLECYSGISGDMAVSALLDLGADVDVLKKSLHSLNLEGYEINIGRRQKCGIDACYFDVVLEGEANHHHDHQEKHDHHHGGHPVHRNIKDIYEIIDNSQISDRSKILSKKIFHVVAKAEAKAHGIAIDEVHFHEVGAVDSIVDIVAAAVCLDNLEINEVMISDLYEGSGHVKCQHGVLPVPVPAVANIVMDNGLNLRITDTRGELVTPTGAAIAAAIKTKDTLPASYGIKKIGIGSGTKDLPKANILRAYIIEDNRNYPKKTVAVEDHIDSLDDGEAWVLETNIDDATGESLGFTMERLLENGANDVFFSPIYMKKNRPAYKLSVICTKENVKIMESIIFKNTTTIGIRKHKIRRTVLKREVTTIDTKYGQVRVKVCEFENETYYYPEYEDIKRICNETGLGFQRVYDEVEKTKTVG.

It belongs to the LarC family.

It carries out the reaction Ni(II)-pyridinium-3,5-bisthiocarboxylate mononucleotide = pyridinium-3,5-bisthiocarboxylate mononucleotide + Ni(2+). In terms of biological role, involved in the biosynthesis of a nickel-pincer cofactor ((SCS)Ni(II) pincer complex). Binds Ni(2+), and functions in nickel delivery to pyridinium-3,5-bisthiocarboxylic acid mononucleotide (P2TMN), to form the mature cofactor. Is thus probably required for the activation of nickel-pincer cofactor-dependent enzymes. This Alkaliphilus metalliredigens (strain QYMF) protein is Pyridinium-3,5-bisthiocarboxylic acid mononucleotide nickel insertion protein.